The chain runs to 297 residues: MTTVIDGNEIGDQITEGVAACTDTLVSEGVTPGLATVLMSDDGASETYVSMKQRACNEIGIEGFHHQISADESAEALFSTIDELNADPAVHGILVQMPVPDHVPKRDVLERIDPMKDVDGFHPENVGRLVAGNARYKPCTPHGIQKMLAETGVVTEGKDVVVVGRSDIVGKPMANLLIQYGPGGNATTTVCHSRTDDLADKTRNADIVIAAAGVPEMIDGSMLSAGTTVIDVGINRVDADTEKGYELVGDVDFESAKEKADAITPVPGGVGPLTIAMLLYNTVKAASLQSGVDIRLP.

Residues 164–166 (GRS), Ser193, and Ile234 contribute to the NADP(+) site.

It belongs to the tetrahydrofolate dehydrogenase/cyclohydrolase family. As to quaternary structure, homodimer.

The enzyme catalyses (6R)-5,10-methylene-5,6,7,8-tetrahydrofolate + NADP(+) = (6R)-5,10-methenyltetrahydrofolate + NADPH. The catalysed reaction is (6R)-5,10-methenyltetrahydrofolate + H2O = (6R)-10-formyltetrahydrofolate + H(+). It functions in the pathway one-carbon metabolism; tetrahydrofolate interconversion. Catalyzes the oxidation of 5,10-methylenetetrahydrofolate to 5,10-methenyltetrahydrofolate and then the hydrolysis of 5,10-methenyltetrahydrofolate to 10-formyltetrahydrofolate. This is Bifunctional protein FolD 2 from Haloarcula marismortui (strain ATCC 43049 / DSM 3752 / JCM 8966 / VKM B-1809) (Halobacterium marismortui).